Here is a 554-residue protein sequence, read N- to C-terminus: MFCIQCEQTIRTPAGNGCSYSQGMCGKLAATSDLQDLLIYMLQGVSVYAVKAREQGIIDAEIDSFVPKAFFSTLTNVNFDDERIMAYAQQAAKYRTQLKASYEAACEQAGIVAEQVPQVAQLVLGTSKVEMLAQAPIALLNKDKHNVHEDIMGLRLLCLYGLKGAAAYMEHARVLGQTDADVAGRFHEIMSFLGEPSVDGDKLFTTAMDIGQLNYRIMAMLDAGETQAFGHPEPTVVNTKSVKGKAILVSGHDMKDLELILEQTVGKGINVFTHGEMLPALAYPAFKKYPHLVGNYGSAWQNQQQEFANFPGAVVMTSNCIIDPNVGSYSDRIFTRSIVGWPGVVHIEGDDFSAVIDKALVLEGFIYDEIPHTITIGFARNALMAAAPAVVENVKSGAIKHFFLVGGCDGDKADRSYFTELAKSTPKDSLILTLGCGKYKFNKLEFGDINGIPRLLDVGQCNDAYSAIQLAIALAEVFECNINELPLSLVLSWFEQKAIVVLLTLLSLGVKNMRTGPTPPAFLTANLAKILEEKFGLRNTTTVEADLKTMLNVA.

[2Fe-2S] cluster is bound by residues Cys-3, Cys-6, Cys-18, and Cys-25. Hybrid [4Fe-2O-2S] cluster contacts are provided by His-252, Glu-276, Cys-320, Cys-408, Cys-436, Cys-461, Glu-495, and Lys-497. Cys-408 carries the post-translational modification Cysteine persulfide.

This sequence belongs to the HCP family. It depends on [2Fe-2S] cluster as a cofactor. Requires hybrid [4Fe-2O-2S] cluster as cofactor.

It localises to the cytoplasm. The catalysed reaction is A + NH4(+) + H2O = hydroxylamine + AH2 + H(+). Catalyzes the reduction of hydroxylamine to form NH(3) and H(2)O. In Shewanella baltica (strain OS155 / ATCC BAA-1091), this protein is Hydroxylamine reductase.